The primary structure comprises 551 residues: MSDMINIRETGYNFTTILKRLEAATSRLEDLVESGHKPLPNMHRPSRDSNSQTHNISFNIGTPTAPTVSTGSPAVASLHDQVAAAISPRNRSLTSTSAVEAVPASISAYDEFCSKYLSKYMELSKKIGGLIAEQSEHVEKAFNLLRQVLSVALKAQKPDMDSPELLEFLKPIQSELLTITNIRDEHRTAPEFNQLSTVMSGISILGWVTVEPTPLSFMSEMKDSSQFYANRVMKEFKGKDDLQIEWVRSYLTLLTELITYVKTHFKTGLTWSTKQDAVPLKTALANLSASKTQAPSSGDSANGGLPPPPPPPPPSNDFWKDSNEPAPADNKGDMGAVFAEINKGEGITSGLRKVDKSEMTHKNPNLRKTGPTPGPKPKIKSSAPSKPAETAPVKPPRIELENTKWFVENQVDNHSIVLDSVELNHSVQIFGCSNCTIIIKGKLNTVSMSNCKRTSVVVDTLVAAFDIAKCSNFGCQVMNHVPMIVIDQCDGGSIYLSKSSLSSEVVTSKSTSLNINVPNEEGDYAERAVPEQIKHKVNEKGELVSEIVRHE.

Positions 34 to 55 are disordered; the sequence is SGHKPLPNMHRPSRDSNSQTHN. Residue Ser92 is modified to Phosphoserine. A Phosphothreonine modification is found at Thr96. Residues 288–300 are compositionally biased toward polar residues; that stretch reads SASKTQAPSSGDS. 2 disordered regions span residues 288–333 and 348–395; these read SASK…NKGD and TSGL…PVKP. Over residues 305 to 315 the composition is skewed to pro residues; that stretch reads LPPPPPPPPPS. A compositionally biased stretch (basic and acidic residues) spans 352–361; the sequence is RKVDKSEMTH. In terms of domain architecture, C-CAP/cofactor C-like spans 395–529; it reads PPRIELENTK…EEGDYAERAV (135 aa).

It belongs to the CAP family.

In terms of biological role, the N-terminal domain binds to adenylyl cyclase, thereby enabling adenylyl cyclase to be activated by upstream regulatory signals, such as Ras. The C-terminal domain is required for normal cellular morphology and growth control. This Schizosaccharomyces pombe (strain 972 / ATCC 24843) (Fission yeast) protein is Adenylyl cyclase-associated protein (cap1).